The chain runs to 314 residues: Probable manganese-dependent inorganic pyrophosphatase (314 aa).

Mn(2+)-binding residues include His-10, Asp-14, Asp-16, Asp-80, His-102, and Asp-154.

The protein belongs to the PPase class C family. Mn(2+) serves as cofactor.

The protein resides in the cytoplasm. It carries out the reaction diphosphate + H2O = 2 phosphate + H(+). The chain is Probable manganese-dependent inorganic pyrophosphatase (ppaC) from Lactococcus lactis subsp. lactis (strain IL1403) (Streptococcus lactis).